A 461-amino-acid chain; its full sequence is Photosystem II CP43 reaction center protein (461 aa).

Positions 1–2 (ME) are excised as a propeptide. Residue Thr-3 is modified to N-acetylthreonine. Residue Thr-3 is modified to Phosphothreonine. The next 5 membrane-spanning stretches (helical) occupy residues 57–81 (LFEV…PHLA), 122–143 (LLGP…KDRN), 166–188 (KALY…RKIT), 243–263 (KPFA…LSYS), and 279–300 (WFNN…ASQA). Glu-355 is a [CaMn4O5] cluster binding site. Residues 435–459 (RARAAAAGFEKGIDRDFEPVLSMTP) form a helical membrane-spanning segment.

Belongs to the PsbB/PsbC family. PsbC subfamily. In terms of assembly, PSII is composed of 1 copy each of membrane proteins PsbA, PsbB, PsbC, PsbD, PsbE, PsbF, PsbH, PsbI, PsbJ, PsbK, PsbL, PsbM, PsbT, PsbX, PsbY, PsbZ, Psb30/Ycf12, at least 3 peripheral proteins of the oxygen-evolving complex and a large number of cofactors. It forms dimeric complexes. Binds multiple chlorophylls and provides some of the ligands for the Ca-4Mn-5O cluster of the oxygen-evolving complex. It may also provide a ligand for a Cl- that is required for oxygen evolution. PSII binds additional chlorophylls, carotenoids and specific lipids. serves as cofactor.

It localises to the plastid. It is found in the chloroplast thylakoid membrane. Functionally, one of the components of the core complex of photosystem II (PSII). It binds chlorophyll and helps catalyze the primary light-induced photochemical processes of PSII. PSII is a light-driven water:plastoquinone oxidoreductase, using light energy to abstract electrons from H(2)O, generating O(2) and a proton gradient subsequently used for ATP formation. The chain is Photosystem II CP43 reaction center protein from Gossypium barbadense (Sea Island cotton).